We begin with the raw amino-acid sequence, 157 residues long: 2-C-methyl-D-erythritol 2,4-cyclodiphosphate synthase (157 aa).

A divalent metal cation contacts are provided by aspartate 8 and histidine 10. 4-CDP-2-C-methyl-D-erythritol 2-phosphate-binding positions include 8-10 (DVH) and 34-35 (HS). Residue histidine 42 coordinates a divalent metal cation. 4-CDP-2-C-methyl-D-erythritol 2-phosphate-binding positions include 56-58 (DIG), 61-65 (FPDTD), 100-106 (AQAPKMA), 132-135 (TTTE), phenylalanine 139, and arginine 142.

This sequence belongs to the IspF family. In terms of assembly, homotrimer. The cofactor is a divalent metal cation.

The enzyme catalyses 4-CDP-2-C-methyl-D-erythritol 2-phosphate = 2-C-methyl-D-erythritol 2,4-cyclic diphosphate + CMP. The protein operates within isoprenoid biosynthesis; isopentenyl diphosphate biosynthesis via DXP pathway; isopentenyl diphosphate from 1-deoxy-D-xylulose 5-phosphate: step 4/6. Its function is as follows. Involved in the biosynthesis of isopentenyl diphosphate (IPP) and dimethylallyl diphosphate (DMAPP), two major building blocks of isoprenoid compounds. Catalyzes the conversion of 4-diphosphocytidyl-2-C-methyl-D-erythritol 2-phosphate (CDP-ME2P) to 2-C-methyl-D-erythritol 2,4-cyclodiphosphate (ME-CPP) with a corresponding release of cytidine 5-monophosphate (CMP). This chain is 2-C-methyl-D-erythritol 2,4-cyclodiphosphate synthase, found in Pseudomonas savastanoi pv. phaseolicola (strain 1448A / Race 6) (Pseudomonas syringae pv. phaseolicola (strain 1448A / Race 6)).